Here is a 226-residue protein sequence, read N- to C-terminus: 2,3-bisphosphoglycerate-dependent phosphoglycerate mutase (226 aa).

Substrate is bound by residues 8–15 (RHGQSVWN), 21–22 (TG), R58, 109–112 (ERMY), K120, 136–137 (RR), and 180–181 (GN). The active-site Tele-phosphohistidine intermediate is H9. Catalysis depends on E109, which acts as the Proton donor/acceptor.

Belongs to the phosphoglycerate mutase family. BPG-dependent PGAM subfamily.

The catalysed reaction is (2R)-2-phosphoglycerate = (2R)-3-phosphoglycerate. It participates in carbohydrate degradation; glycolysis; pyruvate from D-glyceraldehyde 3-phosphate: step 3/5. Catalyzes the interconversion of 2-phosphoglycerate and 3-phosphoglycerate. The polypeptide is 2,3-bisphosphoglycerate-dependent phosphoglycerate mutase (Chlamydia trachomatis serovar L2 (strain ATCC VR-902B / DSM 19102 / 434/Bu)).